Here is a 245-residue protein sequence, read N- to C-terminus: Glutathione S-transferase F4 (245 aa).

Positions 25 to 106 (AGYKVHGDPF…YIAYVHSSRG (82 aa)) constitute a GST N-terminal domain. Glutathione contacts are provided by residues 35-36 (ST), 64-65 (HK), 77-78 (QV), and 90-91 (ES). The GST C-terminal domain maps to 114–244 (SHETMATLTM…QEKSWFNKPR (131 aa)).

The protein belongs to the GST superfamily. Phi family.

The protein localises to the cytoplasm. It is found in the cytosol. It catalyses the reaction RX + glutathione = an S-substituted glutathione + a halide anion + H(+). Its function is as follows. May be involved in the conjugation of reduced glutathione to a wide number of exogenous and endogenous hydrophobic electrophiles and have a detoxification role against certain herbicides. This chain is Glutathione S-transferase F4 (GSTF4), found in Arabidopsis thaliana (Mouse-ear cress).